The chain runs to 269 residues: Probable cysteine protease avirulence protein AvrPpiC2 (269 aa).

Residues 1–39 (MTIVSGHIGKHPSLTTVQAGSSASVENQMPDPAQFSDGR) form a disordered region. Over residues 13-27 (SLTTVQAGSSASVEN) the composition is skewed to polar residues. Residues cysteine 72, histidine 213, and aspartate 230 contribute to the active site.

The protein belongs to the peptidase C58 family.

Functionally, potential cysteine protease. Avirulence protein, which may be essential during infection of plant cells from Pea and some Arabidopsis thaliana cultivars. May act by affecting the plant defense system. In plants lacking appropriate resistance (R) gene, it probably impairs the plant defense system and leads to the bacteria multiplication. In contrast, in plants containing the appropriate R protein, it is unable to induce disease symptoms, explaining its avirulence name. This Pseudomonas syringae pv. pisi protein is Probable cysteine protease avirulence protein AvrPpiC2 (avrPpiC2).